We begin with the raw amino-acid sequence, 427 residues long: Glutamate-1-semialdehyde 2,1-aminomutase (427 aa).

At lysine 265 the chain carries N6-(pyridoxal phosphate)lysine.

It belongs to the class-III pyridoxal-phosphate-dependent aminotransferase family. HemL subfamily. As to quaternary structure, homodimer. It depends on pyridoxal 5'-phosphate as a cofactor.

The protein resides in the cytoplasm. It catalyses the reaction (S)-4-amino-5-oxopentanoate = 5-aminolevulinate. Its pathway is porphyrin-containing compound metabolism; protoporphyrin-IX biosynthesis; 5-aminolevulinate from L-glutamyl-tRNA(Glu): step 2/2. This is Glutamate-1-semialdehyde 2,1-aminomutase from Pseudomonas putida (strain ATCC 700007 / DSM 6899 / JCM 31910 / BCRC 17059 / LMG 24140 / F1).